The sequence spans 332 residues: 2,3-diketo-L-gulonate reductase (332 aa).

The active-site Proton donor is histidine 44. NAD(+) is bound by residues 168–174 (ITMVDMS), 224–225 (WK), and 304–306 (GHE).

Belongs to the LDH2/MDH2 oxidoreductase family. DlgD subfamily. As to quaternary structure, homodimer.

It is found in the cytoplasm. The catalysed reaction is 3-dehydro-L-gulonate + NAD(+) = 2,3-dioxo-L-gulonate + NADH + H(+). The enzyme catalyses 3-dehydro-L-gulonate + NADP(+) = 2,3-dioxo-L-gulonate + NADPH + H(+). Functionally, catalyzes the reduction of 2,3-diketo-L-gulonate in the presence of NADH, to form 3-keto-L-gulonate. The sequence is that of 2,3-diketo-L-gulonate reductase from Escherichia fergusonii (strain ATCC 35469 / DSM 13698 / CCUG 18766 / IAM 14443 / JCM 21226 / LMG 7866 / NBRC 102419 / NCTC 12128 / CDC 0568-73).